Reading from the N-terminus, the 137-residue chain is Hydrogenase maturation factor HypA (137 aa).

His-2 is a binding site for Ni(2+). Residues Cys-73, Cys-75, Cys-105, and Cys-108 each contribute to the Zn(2+) site.

It belongs to the HypA/HybF family.

Its function is as follows. Involved in the maturation of [NiFe] hydrogenases. Required for nickel insertion into the metal center of the hydrogenase. This Methanosarcina mazei (strain ATCC BAA-159 / DSM 3647 / Goe1 / Go1 / JCM 11833 / OCM 88) (Methanosarcina frisia) protein is Hydrogenase maturation factor HypA.